The following is a 149-amino-acid chain: UPF0756 membrane protein BBR47_32760 (149 aa).

Transmembrane regions (helical) follow at residues 3-23 (WISI…NATV), 48-68 (HGLQ…LASG), 85-105 (LLAV…TVLM), 106-126 (SQNP…VTFF), and 128-148 (GVAV…QFLP).

The protein belongs to the UPF0756 family.

The protein resides in the cell membrane. This is UPF0756 membrane protein BBR47_32760 from Brevibacillus brevis (strain 47 / JCM 6285 / NBRC 100599).